Consider the following 579-residue polypeptide: MEVRGGVGQGSAARHPPAPEPSRAAARVQAGDALPLPIRHTNLIFSALFAASLAYLMRRWREKIRSSTPLHAVGLAEMLAIFGLVASLIYLLSFFGIAFVQSIVSSGDDDEDFLVGSGSSGSAAAPSRQHAQAPAPCELLGSPAAAPEKMPEDDEEIVASVVAGKVPSYALEARLGDCRRAAGIRREALRRITGRDIEGLPLDGFDYASILGQCCELPVGYVQLPVGVAGPLLLDGRRFYLPMATTEGCLVASTNRGCKAIAESGGATSVVLRDAMTRAPVARFPTARRAAELKAFLEDPANFDTLSVVFNRSSRFARLQGVQCAMAGRNLYMRFSCSTGDAMGMNMVSKGVQNVLDFLQDDFHDMDVISISGNFCSDKKPSAVNWIEGRGKSVVCEAVIGEEVVKKVLKTDVQSLVELNTIKNLAGSAVAGALGGFNAHASNIVTAIFIATGQDPAQNVESSHCITMLEPVNAGRDLHISVTMPSIEVGTVGGGTQLASQSACLDLLGVRGASRDRPGSNARLLATVVAGGVLAGELSLLSALAAGQLVKSHMKYNRSSKDVSSTTATEKTRQREVDV.

The segment at 1–22 is disordered; sequence MEVRGGVGQGSAARHPPAPEPS. Transmembrane regions (helical) follow at residues 36–56 and 80–100; these read LPIR…LAYL and AIFG…IAFV. Positions 101–153 are linker; that stretch reads QSIVSSGDDDEDFLVGSGSSGSAAAPSRQHAQAPAPCELLGSPAAAPEKMPED. The catalytic stretch occupies residues 154-579; it reads DEEIVASVVA…EKTRQREVDV (426 aa). The active-site Charge relay system is the E247. The N-linked (GlcNAc...) asparagine glycan is linked to N311. Active-site charge relay system residues include K379 and D455. The helical transmembrane segment at 524–544 threads the bilayer; sequence LLATVVAGGVLAGELSLLSAL. H553 (proton donor) is an active-site residue. Positions 555-579 are disordered; sequence KYNRSSKDVSSTTATEKTRQREVDV. An N-linked (GlcNAc...) asparagine glycan is attached at N557. Basic and acidic residues predominate over residues 570 to 579; the sequence is EKTRQREVDV.

The protein belongs to the HMG-CoA reductase family.

The protein localises to the endoplasmic reticulum membrane. It carries out the reaction (R)-mevalonate + 2 NADP(+) + CoA = (3S)-3-hydroxy-3-methylglutaryl-CoA + 2 NADPH + 2 H(+). It participates in metabolic intermediate biosynthesis; (R)-mevalonate biosynthesis; (R)-mevalonate from acetyl-CoA: step 3/3. Functionally, catalyzes the synthesis of mevalonate. The specific precursor of all isoprenoid compounds present in plants. The polypeptide is 3-hydroxy-3-methylglutaryl-coenzyme A reductase (HMGR) (Zea mays (Maize)).